The chain runs to 653 residues: Cell wall adhesin EAP1 (653 aa).

Residues 1–18 form the signal peptide; it reads MKVSQILPLAGAISVASG. Residues 19–146 form an N-terminal cell-cell adhesion domain region; the sequence is FWIPDFSNKQ…EYTTYCPLTS (128 aa). The segment at 144-267 is disordered; sequence LTSTPATEST…TETASSTPVE (124 aa). Residues 145–267 are compositionally biased toward low complexity; that stretch reads TSTPATESTP…TETASSTPVE (123 aa). 15 tandem repeats follow at residues 147–152, 153–158, 159–164, 165–170, 171–176, 177–182, 192–197, 198–203, 204–209, 210–215, 216–221, 222–227, 228–233, 234–248, and 249–254. The tract at residues 147-254 is 15 X 6 AA tandem repeats, Ser/Thr-rich; sequence TPATESTPAT…STETTPATES (108 aa). N-linked (GlcNAc...) asparagine glycosylation occurs at asparagine 323. Disordered stretches follow at residues 324–540 and 572–595; these read TSTP…TTQP and EGGCVPEGQQTETSPSVPTNGPEV. 10 tandem repeats follow at residues 326–345, 346–365, 366–389, 390–413, 414–433, 434–457, 458–477, 478–501, 502–521, and 522–541. The segment at 326–541 is 10 X 20 AA approximate tandem repeats; the sequence is TPAAPGTPVE…EATPVTTQPV (216 aa). 2 stretches are compositionally biased toward low complexity: residues 341 to 353 and 361 to 538; these read PGTETTPAAPGTP and PGTE…PVTT. A compositionally biased stretch (polar residues) spans 579–590; sequence GQQTETSPSVPT. Glycine 632 carries GPI-anchor amidated glycine lipidation. A propeptide spans 633-653 (removed in mature form); it reads SGSALKKPYYGLAVAALVYFM.

The protein belongs to the PGA18 family. Post-translationally, the GPI-anchor is attached to the protein in the endoplasmic reticulum and serves to target the protein to the cell surface. There, the glucosamine-inositol phospholipid moiety is cleaved off and the GPI-modified mannoprotein is covalently attached via its lipidless GPI glycan remnant to the 1,6-beta-glucan of the outer cell wall layer.

It is found in the secreted. Its subcellular location is the cell wall. The protein localises to the membrane. Functionally, cell wall protein which mediates cell-cell and cell-substrate adhesion. Required for biofilm formation and plays a role in virulence. The sequence is that of Cell wall adhesin EAP1 (EAP1) from Candida albicans (strain SC5314 / ATCC MYA-2876) (Yeast).